A 463-amino-acid chain; its full sequence is Quinolone resistance protein NorB (463 aa).

A run of 14 helical transmembrane segments spans residues 17–37, 53–73, 86–106, 107–127, 142–162, 165–185, 201–221, 230–250, 273–293, 299–319, 334–354, 357–377, 403–423, and 435–455; these read IGIV…VNVV, IAVS…GGLA, IILN…LLLI, IGRL…LSII, YWSI…GAVA, LGWR…LFLI, FDIK…ILIT, SLLF…FIVL, TASN…NTFV, YSSL…LIMI, PMLI…LTFL, ILYV…LGIY, MASA…YAIV, and IALW…LLLV.

Belongs to the major facilitator superfamily. TCR/Tet family.

The protein resides in the cell membrane. Its function is as follows. Multidrug efflux pump that acts independently of NorA and is one of the factors that confers resistance against diverse quinolones and chemical compounds. This chain is Quinolone resistance protein NorB (norB), found in Staphylococcus aureus (strain Mu3 / ATCC 700698).